The primary structure comprises 665 residues: Intraflagellar transport protein 70A (665 aa).

TPR repeat units follow at residues 11 to 44 (DGEF…SPRS), 45 to 78 (RAGL…HPEL), 154 to 187 (TDGQ…SGYQ), 189 to 221 (DLSY…GIRQ), 393 to 424 (LTKQ…EKYI), 425 to 457 (PVLM…CNDH), and 459 to 492 (VWKL…HYDN). Residues 508–535 (YIMTSQNEEAEELMRKIEKEEEQLSYDD) are a coiled coil. A TPR 8 repeat occupies 544–577 (CIVNLVIGTLYCAKGNYEFGISRVIKSLEPYNKK).

This sequence belongs to the TTC30/dfy-1/fleer family.

Its subcellular location is the cell projection. The protein localises to the cilium. Required for polyglutamylation of axonemal tubulin. Plays a role in anterograde intraflagellar transport (IFT), the process by which cilia precursors are transported from the base of the cilium to the site of their incorporation at the tip. This Homo sapiens (Human) protein is Intraflagellar transport protein 70A.